The chain runs to 202 residues: Putative NAD(P)H nitroreductase YodC (202 aa).

FMN contacts are provided by residues Arg11–Ser13, Gln68–Gln70, Gly155–Gly156, and Arg192.

This sequence belongs to the nitroreductase family. The cofactor is FMN.

Its subcellular location is the cytoplasm. Functionally, putative nitroreductase that may contribute to the degradation of aromatic compounds. The sequence is that of Putative NAD(P)H nitroreductase YodC (yodC) from Bacillus subtilis (strain 168).